Here is a 101-residue protein sequence, read N- to C-terminus: Small ribosomal subunit protein eS24 (101 aa).

It belongs to the eukaryotic ribosomal protein eS24 family.

The protein is Small ribosomal subunit protein eS24 of Methanosarcina barkeri (strain Fusaro / DSM 804).